A 207-amino-acid polypeptide reads, in one-letter code: Large ribosomal subunit protein uL4 (207 aa).

Residues 44–78 form a disordered region; sequence MRQGTHKTKNRAEVSGGGRKPWRQKGTGRARQGSI.

This sequence belongs to the universal ribosomal protein uL4 family. As to quaternary structure, part of the 50S ribosomal subunit.

In terms of biological role, one of the primary rRNA binding proteins, this protein initially binds near the 5'-end of the 23S rRNA. It is important during the early stages of 50S assembly. It makes multiple contacts with different domains of the 23S rRNA in the assembled 50S subunit and ribosome. Functionally, forms part of the polypeptide exit tunnel. The chain is Large ribosomal subunit protein uL4 from Geobacillus kaustophilus (strain HTA426).